The sequence spans 309 residues: Fe-S cluster assembly protein dre2 (309 aa).

The segment at Met1–Val132 is N-terminal SAM-like domain. A linker region spans residues Pro133–Gln195. Positions 207, 216, 219, and 221 each coordinate [2Fe-2S] cluster. A fe-S binding site A region spans residues Cys207–Cys221. [4Fe-4S] cluster-binding residues include Cys265, Cys268, Cys276, and Cys279. Short sequence motifs (cx2C motif) lie at residues Cys265–Cys268 and Cys276–Cys279. A fe-S binding site B region spans residues Cys265–Cys279.

The protein belongs to the anamorsin family. Monomer. Interacts with TAH18. Interacts with MIA40. The cofactor is [2Fe-2S] cluster. [4Fe-4S] cluster is required as a cofactor.

It is found in the cytoplasm. The protein resides in the mitochondrion intermembrane space. Its function is as follows. Component of the cytosolic iron-sulfur (Fe-S) protein assembly (CIA) machinery required for the maturation of extramitochondrial Fe-S proteins. Part of an electron transfer chain functioning in an early step of cytosolic Fe-S biogenesis, facilitating the de novo assembly of a [4Fe-4S] cluster on the scaffold complex CFD1-NBP35. Electrons are transferred to DRE2 from NADPH via the FAD- and FMN-containing protein TAH18. TAH18-DRE2 are also required for the assembly of the diferric tyrosyl radical cofactor of ribonucleotide reductase (RNR), probably by providing electrons for reduction during radical cofactor maturation in the catalytic small subunit RNR2. The polypeptide is Fe-S cluster assembly protein dre2 (Schizosaccharomyces japonicus (strain yFS275 / FY16936) (Fission yeast)).